Consider the following 282-residue polypeptide: tRNA (adenine(57)-N(1)/adenine(58)-N(1))-methyltransferase TrmI (282 aa).

S-adenosyl-L-methionine-binding positions include 98 to 101 (SGAL), Asp-119, Asp-172, and Asp-188.

It belongs to the class I-like SAM-binding methyltransferase superfamily. TRM61 family. As to quaternary structure, homotetramer composed of a dimer of dimers.

The catalysed reaction is adenosine(57)/adenosine(58) in tRNA + 2 S-adenosyl-L-methionine = N(1)-methyladenosine(57)/N(1)-methyladenosine(58) in tRNA + 2 S-adenosyl-L-homocysteine + 2 H(+). Catalyzes the S-adenosyl-L-methionine-dependent formation of N(1)-methyladenine at position 58 (m1A58) in tRNA. This is tRNA (adenine(57)-N(1)/adenine(58)-N(1))-methyltransferase TrmI (trmI) from Methanocaldococcus jannaschii (strain ATCC 43067 / DSM 2661 / JAL-1 / JCM 10045 / NBRC 100440) (Methanococcus jannaschii).